The chain runs to 119 residues: Ethylene-responsive proteinase inhibitor 1 (119 aa).

A signal peptide spans 1–27; the sequence is MEANKSMVKLVAFLIILVSSCFQSLTA. Residues 28-48 constitute a propeptide that is removed on maturation; the sequence is QDLEIEVSDGLNVLQVHDVSQ.

Belongs to the protease inhibitor I13 (potato type I serine protease inhibitor) family.

The protein localises to the secreted. This is Ethylene-responsive proteinase inhibitor 1 from Solanum lycopersicum (Tomato).